A 566-amino-acid polypeptide reads, in one-letter code: Proline--tRNA ligase (566 aa).

It belongs to the class-II aminoacyl-tRNA synthetase family. ProS type 1 subfamily. In terms of assembly, homodimer.

The protein resides in the cytoplasm. The enzyme catalyses tRNA(Pro) + L-proline + ATP = L-prolyl-tRNA(Pro) + AMP + diphosphate. Functionally, catalyzes the attachment of proline to tRNA(Pro) in a two-step reaction: proline is first activated by ATP to form Pro-AMP and then transferred to the acceptor end of tRNA(Pro). As ProRS can inadvertently accommodate and process non-cognate amino acids such as alanine and cysteine, to avoid such errors it has two additional distinct editing activities against alanine. One activity is designated as 'pretransfer' editing and involves the tRNA(Pro)-independent hydrolysis of activated Ala-AMP. The other activity is designated 'posttransfer' editing and involves deacylation of mischarged Ala-tRNA(Pro). The misacylated Cys-tRNA(Pro) is not edited by ProRS. The polypeptide is Proline--tRNA ligase (Bacillus cereus (strain Q1)).